Reading from the N-terminus, the 349-residue chain is Phenylalanine--tRNA ligase alpha subunit (349 aa).

Glutamate 258 is a Mg(2+) binding site.

The protein belongs to the class-II aminoacyl-tRNA synthetase family. Phe-tRNA synthetase alpha subunit type 1 subfamily. In terms of assembly, tetramer of two alpha and two beta subunits. Mg(2+) serves as cofactor.

The protein localises to the cytoplasm. It catalyses the reaction tRNA(Phe) + L-phenylalanine + ATP = L-phenylalanyl-tRNA(Phe) + AMP + diphosphate + H(+). The polypeptide is Phenylalanine--tRNA ligase alpha subunit (Rickettsia canadensis (strain McKiel)).